Reading from the N-terminus, the 1200-residue chain is Zinc finger protein 804A (1200 aa).

The C2H2-type zinc-finger motif lies at F57–H81. 6 disordered regions span residues S252–M280, D343–A367, H582–G687, E727–S777, Q799–M828, and P874–E949. Over residues H585–K603 the composition is skewed to basic residues. Residues S604–T666 are compositionally biased toward basic and acidic residues. 2 stretches are compositionally biased toward polar residues: residues M667–G687 and L732–N756. The span at P800 to L811 shows a compositional bias: basic residues. Residues T891 to K944 are compositionally biased toward polar residues.

This Mus musculus (Mouse) protein is Zinc finger protein 804A (Znf804a).